We begin with the raw amino-acid sequence, 567 residues long: DNA ligase B (567 aa).

The active-site N6-AMP-lysine intermediate is the Lys132.

It belongs to the NAD-dependent DNA ligase family. LigB subfamily.

The catalysed reaction is NAD(+) + (deoxyribonucleotide)n-3'-hydroxyl + 5'-phospho-(deoxyribonucleotide)m = (deoxyribonucleotide)n+m + AMP + beta-nicotinamide D-nucleotide.. In terms of biological role, catalyzes the formation of phosphodiester linkages between 5'-phosphoryl and 3'-hydroxyl groups in double-stranded DNA using NAD as a coenzyme and as the energy source for the reaction. The sequence is that of DNA ligase B from Yersinia pestis bv. Antiqua (strain Angola).